Reading from the N-terminus, the 116-residue chain is Cyclin-dependent protein kinase inhibitor SMR9 (116 aa).

Residues 1-22 are compositionally biased toward basic residues; it reads MASKGKKPLRRTTTRRRKRSHF. The disordered stretch occupies residues 1-62; that stretch reads MASKGKKPLR…PVSAESGCCT (62 aa). Positions 35 to 56 are enriched in low complexity; it reads VTSTSSTSTSPTSTATPSPVSA.

In terms of biological role, probable cyclin-dependent protein kinase (CDK) inhibitor that functions as a repressor of mitosis in the endoreduplication cell cycle. This chain is Cyclin-dependent protein kinase inhibitor SMR9, found in Arabidopsis thaliana (Mouse-ear cress).